The primary structure comprises 240 residues: Large ribosomal subunit protein bL25 (240 aa).

Disordered stretches follow at residues 1–20 (MAEN…GPAR) and 204–240 (GAAP…KAKK). The segment covering 204–229 (GAAPAAGAAAPAGGAAPAAGAAPAKG) has biased composition (low complexity). Over residues 230 to 240 (GEAKGGDKAKK) the composition is skewed to basic and acidic residues.

This sequence belongs to the bacterial ribosomal protein bL25 family. CTC subfamily. In terms of assembly, part of the 50S ribosomal subunit; part of the 5S rRNA/L5/L18/L25 subcomplex. Contacts the 5S rRNA. Binds to the 5S rRNA independently of L5 and L18.

Functionally, this is one of the proteins that binds to the 5S RNA in the ribosome where it forms part of the central protuberance. The sequence is that of Large ribosomal subunit protein bL25 from Anaeromyxobacter sp. (strain K).